A 248-amino-acid polypeptide reads, in one-letter code: Ubiquinone biosynthesis O-methyltransferase (248 aa).

R41, G72, D93, and M136 together coordinate S-adenosyl-L-methionine.

This sequence belongs to the methyltransferase superfamily. UbiG/COQ3 family.

It carries out the reaction a 3-demethylubiquinol + S-adenosyl-L-methionine = a ubiquinol + S-adenosyl-L-homocysteine + H(+). It catalyses the reaction a 3-(all-trans-polyprenyl)benzene-1,2-diol + S-adenosyl-L-methionine = a 2-methoxy-6-(all-trans-polyprenyl)phenol + S-adenosyl-L-homocysteine + H(+). It functions in the pathway cofactor biosynthesis; ubiquinone biosynthesis. Functionally, O-methyltransferase that catalyzes the 2 O-methylation steps in the ubiquinone biosynthetic pathway. The protein is Ubiquinone biosynthesis O-methyltransferase of Brucella anthropi (strain ATCC 49188 / DSM 6882 / CCUG 24695 / JCM 21032 / LMG 3331 / NBRC 15819 / NCTC 12168 / Alc 37) (Ochrobactrum anthropi).